We begin with the raw amino-acid sequence, 145 residues long: UPF0201 protein STK_09490 (145 aa).

The protein belongs to the UPF0201 family.

The protein is UPF0201 protein STK_09490 of Sulfurisphaera tokodaii (strain DSM 16993 / JCM 10545 / NBRC 100140 / 7) (Sulfolobus tokodaii).